The following is a 473-amino-acid chain: Protein translocase subunit SecD (473 aa).

A run of 6 helical transmembrane segments spans residues 5-25 (VLVK…LLYP), 316-336 (ASLY…KSGG), 337-357 (IISN…MAAF), 364-384 (PGIA…VLIL), 409-429 (WSAI…LFQF), and 436-456 (GFAV…VFVT).

It belongs to the SecD/SecF family. SecD subfamily. As to quaternary structure, forms a complex with SecF. Part of the essential Sec protein translocation apparatus which comprises SecA, SecYEG and auxiliary proteins SecDF. Other proteins may also be involved.

The protein localises to the cell inner membrane. Part of the Sec protein translocase complex. Interacts with the SecYEG preprotein conducting channel. SecDF uses the proton motive force (PMF) to complete protein translocation after the ATP-dependent function of SecA. In Elusimicrobium minutum (strain Pei191), this protein is Protein translocase subunit SecD.